Consider the following 349-residue polypeptide: Hydroxymethylglutaryl-CoA synthase (349 aa).

Asp-30 and Ala-31 together coordinate (3S)-3-hydroxy-3-methylglutaryl-CoA. Glu-82 serves as the catalytic Proton donor/acceptor. Residues Cys-114 and Thr-155 each coordinate (3S)-3-hydroxy-3-methylglutaryl-CoA. The Acyl-thioester intermediate role is filled by Cys-114. A CoA-binding site is contributed by Arg-203. (3S)-3-hydroxy-3-methylglutaryl-CoA contacts are provided by Thr-205 and His-238. His-238 functions as the Proton donor/acceptor in the catalytic mechanism. Lys-243 contributes to the CoA binding site. 2 residues coordinate (3S)-3-hydroxy-3-methylglutaryl-CoA: Asn-270 and Ser-300.

This sequence belongs to the thiolase-like superfamily. Archaeal HMG-CoA synthase family. In terms of assembly, interacts with acetoacetyl-CoA thiolase that catalyzes the precedent step in the pathway and with a DUF35 protein. The acetoacetyl-CoA thiolase/HMG-CoA synthase complex channels the intermediate via a fused CoA-binding site, which allows for efficient coupling of the endergonic thiolase reaction with the exergonic HMGCS reaction.

It catalyses the reaction acetoacetyl-CoA + acetyl-CoA + H2O = (3S)-3-hydroxy-3-methylglutaryl-CoA + CoA + H(+). The protein operates within metabolic intermediate biosynthesis; (R)-mevalonate biosynthesis; (R)-mevalonate from acetyl-CoA: step 2/3. Catalyzes the condensation of acetyl-CoA with acetoacetyl-CoA to form 3-hydroxy-3-methylglutaryl-CoA (HMG-CoA). Functions in the mevalonate (MVA) pathway leading to isopentenyl diphosphate (IPP), a key precursor for the biosynthesis of isoprenoid compounds that are building blocks of archaeal membrane lipids. This Methanococcus maripaludis (strain C6 / ATCC BAA-1332) protein is Hydroxymethylglutaryl-CoA synthase.